The sequence spans 328 residues: Cytochrome c biogenesis protein CcsA (328 aa).

8 helical membrane passes run 13–33, 46–66, 73–93, 101–121, 146–166, 234–254, 263–283, and 295–315; these read ISFS…LVNL, GIII…IYSG, LYES…VSYF, LNTI…SGLL, MILG…LLVI, IISL…VWAN, WDPK…YLHI, and AIVA…VNLL.

It belongs to the CcmF/CycK/Ccl1/NrfE/CcsA family. As to quaternary structure, may interact with Ccs1.

Its subcellular location is the plastid. The protein localises to the chloroplast thylakoid membrane. Required during biogenesis of c-type cytochromes (cytochrome c6 and cytochrome f) at the step of heme attachment. This is Cytochrome c biogenesis protein CcsA from Arabidopsis thaliana (Mouse-ear cress).